The sequence spans 421 residues: Signal recognition particle receptor FtsY (421 aa).

Residues 1–10 (MFSFFRRKKK) show a composition bias toward basic residues. Residues 1–22 (MFSFFRRKKKQETPAPEEAQIQ) are disordered. GTP-binding positions include 228 to 235 (GINGAGKT), 309 to 313 (DTAGR), and 373 to 376 (TKLD).

Belongs to the GTP-binding SRP family. FtsY subfamily. Part of the signal recognition particle protein translocation system, which is composed of SRP and FtsY. SRP is a ribonucleoprotein composed of Ffh and a 4.5S RNA molecule.

It is found in the cell membrane. The protein resides in the cytoplasm. The catalysed reaction is GTP + H2O = GDP + phosphate + H(+). Functionally, involved in targeting and insertion of nascent membrane proteins into the cytoplasmic membrane. Acts as a receptor for the complex formed by the signal recognition particle (SRP) and the ribosome-nascent chain (RNC). Interaction with SRP-RNC leads to the transfer of the RNC complex to the Sec translocase for insertion into the membrane, the hydrolysis of GTP by both Ffh and FtsY, and the dissociation of the SRP-FtsY complex into the individual components. In Neisseria meningitidis serogroup C, this protein is Signal recognition particle receptor FtsY.